Reading from the N-terminus, the 347-residue chain is Queuosine 5'-phosphate N-glycosylase/hydrolase (347 aa).

Queuine-binding residues include His53, Phe237, Asp239, Asp321, and Asp326. The active-site Nucleophile or transition state stabilizer is the Asp239.

The protein belongs to the QNG1 protein family.

The catalysed reaction is queuosine 5'-phosphate + H2O = queuine + D-ribose 5-phosphate. Functionally, catalyzes the hydrolysis of queuosine 5'-phosphate, releasing the nucleobase queuine (q). Is required for salvage of queuine from exogenous queuosine (Q) that is imported and then converted to queuosine 5'-phosphate intracellularly. This Nematostella vectensis (Starlet sea anemone) protein is Queuosine 5'-phosphate N-glycosylase/hydrolase.